We begin with the raw amino-acid sequence, 589 residues long: Probable 9-cis-epoxycarotenoid dioxygenase NCED5, chloroplastic (589 aa).

A chloroplast-targeting transit peptide spans 1 to 45 (MACSYILTPNPTKLNLSFAPSDLDAPSPSSSVSFTNTKPRRRKLS). Over residues 21–34 (SDLDAPSPSSSVSF) the composition is skewed to low complexity. The tract at residues 21-51 (SDLDAPSPSSSVSFTNTKPRRRKLSANSVSD) is disordered. Residues His287, His336, His401, and His576 each contribute to the Fe cation site.

It belongs to the carotenoid oxygenase family. As to quaternary structure, interacts in vitro with VAR3. Fe(2+) is required as a cofactor. Detected only in seeds.

It is found in the plastid. The protein localises to the chloroplast thylakoid membrane. It carries out the reaction a 9-cis-epoxycarotenoid + O2 = a 12'-apo-carotenal + 2-cis,4-trans-xanthoxin. It catalyses the reaction 9-cis-violaxanthin + O2 = (3S,5R,6S)-5,6-epoxy-3-hydroxy-5,6-dihydro-12'-apo-beta-caroten-12'-al + 2-cis,4-trans-xanthoxin. The enzyme catalyses 9'-cis-neoxanthin + O2 = (3S,5R,6R)-3,5-dihydroxy-6,7-didehydro-5,6-dihydro-12'-apo-beta-caroten-12'-al + 2-cis,4-trans-xanthoxin. Has a 11,12(11',12') 9-cis epoxycarotenoid cleavage activity. Catalyzes the first step of abscisic-acid biosynthesis from carotenoids. The protein is Probable 9-cis-epoxycarotenoid dioxygenase NCED5, chloroplastic (NCED5) of Arabidopsis thaliana (Mouse-ear cress).